Here is a 123-residue protein sequence, read N- to C-terminus: Con-ikot-ikot (123 aa).

An N-terminal signal peptide occupies residues 1 to 18 (MAMNMSMTLCMFVMVVVA). Residues 19-37 (ATVIDSTQLQEPDLSRMRR) constitute a propeptide that is removed on maturation. 5 cysteine pairs are disulfide-bonded: cysteine 49–cysteine 80, cysteine 50–cysteine 89, cysteine 57–cysteine 72, cysteine 90–cysteine 118, and cysteine 96–cysteine 113.

Homodimer; disulfide-linked. Expressed by the venom duct.

It is found in the secreted. Its function is as follows. Potently and selectively blocks the desensitization of ionotropic glutamate AMPA receptors (GRIA1, GRIA2, GRIA3 and GRIA4). Binds to a different site than does the drug cyclothiazide. The toxin acts like a straitjacket on the 'gating ring' of the ligand-binding domain (LBD) of the receptor. It does so by restraining the domains via both intra- and interdimer cross-links such that agonist-induced closure of the LBD 'clamshells' is transduced into an irislike expansion of the gating ring. Compared to other desensitization blockers, it is a poor stabilizer of the open channel because toxin-bound AMPA receptors undergo frequent brief closures. In vitro, application of the toxin to hippocampal slices causes a large and rapid increase in resting AMPA receptor-mediated current leading to neuronal death. The sequence is that of Con-ikot-ikot from Conus striatus (Striated cone).